Consider the following 318-residue polypeptide: uncharacterized protein (318 aa).

Residues methionine 1–tyrosine 22 show a composition bias toward basic and acidic residues. Disordered stretches follow at residues methionine 1 to arginine 29 and aspartate 293 to glutamate 318.

This is an uncharacterized protein from Ictalurid herpesvirus 1 (strain Auburn) (IcHV-1).